The sequence spans 458 residues: Divalent metal cation transporter MntH (458 aa).

11 helical membrane passes run 38-58, 76-96, 119-139, 151-171, 180-200, 223-243, 275-295, 315-335, 370-390, 393-413, and 437-457; these read GFWK…VGYM, SLLS…AMAA, GGFL…AEII, MPLI…LLLM, AVVA…VILA, MLYL…LFLG, LTMA…LFFG, IVGA…LLAS, LMSV…EAKI, LLTF…IPLV, and FISG…LGFV.

It belongs to the NRAMP family.

It localises to the cell membrane. Its function is as follows. H(+)-stimulated, divalent metal cation uptake system. The chain is Divalent metal cation transporter MntH from Lacticaseibacillus casei (strain BL23) (Lactobacillus casei).